A 355-amino-acid chain; its full sequence is GPN-loop GTPase 1 (355 aa).

Residues 1-30 (MAEKAENLPSSSAEASEEPSPQTGPNVNQK) form a disordered region. Over residues 9 to 21 (PSSSAEASEEPSP) the composition is skewed to low complexity. 40–45 (GSGKTT) is a binding site for GTP. A Gly-Pro-Asn (GPN)-loop; involved in dimer interface motif is present at residues 97–99 (GPN). 200–203 (NKAD) contacts GTP. Residues 286–311 (EKVLAEKKLLDEEERKKRDEETLKGK) adopt a coiled-coil conformation.

Belongs to the GPN-loop GTPase family. In terms of assembly, heterodimer with GPN3. Binds to RNA polymerase II (RNAPII).

It is found in the cytoplasm. The protein resides in the nucleus. Small GTPase required for proper nuclear import of RNA polymerase II (RNAPII). May act at an RNAP assembly step prior to nuclear import. The polypeptide is GPN-loop GTPase 1 (Caenorhabditis elegans).